A 681-amino-acid polypeptide reads, in one-letter code: PTS system glucose-specific EIICBA component (681 aa).

A PTS EIIC type-1 domain is found at K3–D414. 10 consecutive transmembrane segments (helical) span residues L16–I36, M73–A93, I126–A146, F170–W190, A199–I219, F273–Y293, V303–P323, F328–L348, V355–P375, and V383–V403. The region spanning T425–E506 is the PTS EIIB type-1 domain. C447 acts as the Phosphocysteine intermediate; for EIIB activity in catalysis. A PTS EIIA type-1 domain is found at D551–Q655. The Tele-phosphohistidine intermediate; for EIIA activity role is filled by H603.

It localises to the cell membrane. The catalysed reaction is N(pros)-phospho-L-histidyl-[protein] + D-glucose(out) = D-glucose 6-phosphate(in) + L-histidyl-[protein]. Its function is as follows. The phosphoenolpyruvate-dependent sugar phosphotransferase system (sugar PTS), a major carbohydrate active transport system, catalyzes the phosphorylation of incoming sugar substrates concomitantly with their translocation across the cell membrane. This system is involved in glucose transport. This is PTS system glucose-specific EIICBA component (ptsG) from Staphylococcus aureus (strain JH9).